Consider the following 186-residue polypeptide: Probable RNA 2'-phosphotransferase (186 aa).

Belongs to the KptA/TPT1 family.

Removes the 2'-phosphate from RNA via an intermediate in which the phosphate is ADP-ribosylated by NAD followed by a presumed transesterification to release the RNA and generate ADP-ribose 1''-2''-cyclic phosphate (APPR&gt;P). May function as an ADP-ribosylase. This Hahella chejuensis (strain KCTC 2396) protein is Probable RNA 2'-phosphotransferase.